The sequence spans 3430 residues: Genome polyprotein (3430 aa).

The tract at residues 2–15 (SKKPGGPGKNRAVN) is interaction with host EXOC1. Over 2–105 (SKKPGGPGKN…NRRSTKQKKR (104 aa)) the chain is Cytoplasmic. The interval 37-72 (LIDGKGPIRFVLALLAFFRFTAIAPTRAVLDRWRGV) is hydrophobic; homodimerization of capsid protein C. A propeptide spans 106-123 (GGTAGFTILLGLIACAGA) (ER anchor for the capsid protein C, removed in mature form by serine protease NS3). The chain crosses the membrane as a helical span at residues 106–126 (GGTAGFTILLGLIACAGAVTL). Residues 127–248 (SNFQGKVMMT…KATRYLVKTE (122 aa)) lie on the Extracellular side of the membrane. N138 is a glycosylation site (N-linked (GlcNAc...) asparagine; by host). A helical membrane pass occupies residues 249-269 (SWILRNPGYALVAAVIGWMLG). Over 270-275 (SNTMQR) the chain is Cytoplasmic. Residues 276 to 290 (VVFAILLLLVAPAYS) traverse the membrane as a helical segment. The Extracellular portion of the chain corresponds to 291-739 (FNCLGMSNRD…QVFGGAFRSL (449 aa)). 6 cysteine pairs are disulfide-bonded: C293/C320, C350/C406, C364/C395, C382/C411, C476/C574, and C591/C622. The interval 388-401 (DRGWGNGCGLFGKG) is fusion peptide. The helical transmembrane segment at 740-760 (FGGMSWITQGLLGALLLWMGI) threads the bilayer. At 761–766 (NARDRS) the chain is on the cytoplasmic side. The chain crosses the membrane as a helical span at residues 767–787 (IAMTFLAVGGVLLFLSVNVHA). The Extracellular segment spans residues 788 to 1212 (DTGCAIDIGR…AFAEANSGGD (425 aa)). Cystine bridges form between C791-C802 and C842-C930. 3 N-linked (GlcNAc...) asparagine; by host glycosylation sites follow: N917, N962, and N994. Disulfide bonds link C966-C1010, C1067-C1116, C1078-C1099, and C1100-C1103. A helical membrane pass occupies residues 1213-1233 (VVHLALMATFKIQPVFLVASF). The Cytoplasmic segment spans residues 1234-1243 (LKARWTNQES). A helical membrane pass occupies residues 1244 to 1264 (ILLMLAAAFFQMAYYDAKNVL). Over 1265–1278 (SWEVPDVLNSLSVA) the chain is Lumenal. The chain crosses the membrane as a helical span at residues 1279 to 1299 (WMILRAISFTNTSNVVVPLLA). The Cytoplasmic portion of the chain corresponds to 1300–1307 (LLTPGLKC). The helical transmembrane segment at 1308 to 1328 (LNLDVYRILLLMVGVGSLIKE) threads the bilayer. Residues 1329–1340 (KRSSAAKKKGAC) are Lumenal-facing. A helical membrane pass occupies residues 1341-1361 (LICLALASTGVFNPMILAAGL). Topologically, residues 1362–1371 (MACDPNRKRG) are cytoplasmic. The helical transmembrane segment at 1372–1392 (WPATEVMTAVGLMFAIVGGLA) threads the bilayer. The Lumenal segment spans residues 1393 to 1395 (ELD). A helical membrane pass occupies residues 1396 to 1416 (IDSMAIPMTIAGLMFAAFVIS). Residues 1417 to 1473 (GKSTDMWIERTADITWESDAEITGSSERVDVRLDDDGNFQLMNDPGAPWKIWMLRMA) are Cytoplasmic-facing. The interval 1424 to 1463 (IERTADITWESDAEITGSSERVDVRLDDDGNFQLMNDPGA) is interacts with and activates NS3 protease. The helical intramembrane region spans 1474–1494 (CLAISAYTPWAILPSVIGFWI). Residues 1495 to 2170 (TLQYTKRGGV…RMALEELPDA (676 aa)) lie on the Cytoplasmic side of the membrane. Residues 1502–1679 (GGVLWDTPSP…ERMEEPAPAG (178 aa)) form the Peptidase S7 domain. Active-site charge relay system; for serine protease NS3 activity residues include H1552, D1576, and S1636. Positions 1682-1838 (PEMLRKKQIT…ESNAPISDMQ (157 aa)) constitute a Helicase ATP-binding domain. The important for RNA-binding stretch occupies residues 1686–1689 (RKKQ). 1695–1702 (LHPGAGKT) lines the ATP pocket. Residues 1786 to 1789 (DEAH) carry the DEAH box motif. Residues 1849-2014 (GYEWITEYVG…GLVAQLYQPE (166 aa)) form the Helicase C-terminal domain. K1890 carries the N6-acetyllysine; by host modification. The regulates the ATPase activity of NS3 helicase stretch occupies residues 2165-2169 (EELPD). The chain crosses the membrane as a helical span at residues 2171–2191 (LQTIVLIALLSVMSLGVFFLL). Residues 2192 to 2196 (MQRKG) lie on the Lumenal side of the membrane. The segment at residues 2197–2217 (IGKIGLGGVILGAATFFCWMA) is an intramembrane region (helical). E2218 is a topological domain (lumenal). Residues 2219 to 2239 (VPGTKIAGMLLLSLLLMIVLI) form a helical membrane-spanning segment. Residues 2240 to 2254 (PEPEKQRSQTDNQLA) are Cytoplasmic-facing. A helical membrane pass occupies residues 2255–2275 (VFLICVLTLVGAVAANEMGWL). Topologically, residues 2276 to 2309 (DKTKNDIGSLLGHRPEARETTLGVESFLLDLRPA) are lumenal. Positions 2310-2330 (TAWSLYAVTTAVLTPLLKHLI) form an intramembrane region, helical. At 2331-2377 (TSDYINTSLTSINVQASALFTLARGFPFVDVGVSALLLAVGCWGQVT) the chain is on the lumenal side. A helical transmembrane segment spans residues 2378 to 2398 (LTVTVTAAALLFCHYAYMVPG). The Cytoplasmic portion of the chain corresponds to 2399 to 2441 (WQAEAMRSAQRRTAAGIMKNVVVDGIVATDVPELERTTPVMQK). A helical membrane pass occupies residues 2442–2462 (KVGQIILILVSMAAVVVNPSV). Residues 2463–2467 (RTVRE) lie on the Lumenal side of the membrane. The helical transmembrane segment at 2468 to 2488 (AGILTTAAAVTLWENGASSVW) threads the bilayer. Over 2489–3430 (NATTAIGLCH…DTIVVEDTVL (942 aa)) the chain is Cytoplasmic. Residues 2526-2791 (GGAKGRTLGE…DVNLGSGTRA (266 aa)) enclose the mRNA cap 0-1 NS5-type MT domain. Position 2581 (S2581) interacts with S-adenosyl-L-methionine. S2581 carries the post-translational modification Phosphoserine. K2586 functions as the For 2'-O-MTase activity in the catalytic mechanism. 6 residues coordinate S-adenosyl-L-methionine: G2611, W2612, T2629, K2630, D2656, and V2657. D2671 functions as the For 2'-O-MTase activity in the catalytic mechanism. I2672 lines the S-adenosyl-L-methionine pocket. Catalysis depends on for 2'-O-MTase activity residues K2707 and E2743. Y2745 is an S-adenosyl-L-methionine binding site. A Nuclear localization signal motif is present at residues 2914 to 2916 (RDK). Zn(2+) contacts are provided by E2965, H2969, C2974, and C2977. The 153-residue stretch at 3055–3207 (GKVYADDTAG…KPLDDRFATS (153 aa)) folds into the RdRp catalytic domain. 3 residues coordinate Zn(2+): H3242, C3258, and C3377. The PDZ-binding motif lies at 3428–3430 (TVL).

This sequence in the N-terminal section; belongs to the class I-like SAM-binding methyltransferase superfamily. mRNA cap 0-1 NS5-type methyltransferase family. As to quaternary structure, homodimer. Interacts (via N-terminus) with host EXOC1 (via C-terminus); this interaction results in EXOC1 degradation through the proteasome degradation pathway. Interacts with host DDX56; this interaction plays an important role in genomic RNA encapsidation. In terms of assembly, forms heterodimers with envelope protein E in the endoplasmic reticulum and Golgi. Homodimer; in the endoplasmic reticulum and Golgi. As to quaternary structure, homodimer; Homohexamer when secreted. Interacts with envelope protein E. NS1 interacts with NS4B. Interacts with host complement protein CFH; this interaction leads to the degradation of C3. In terms of assembly, interacts (via N-terminus) with serine protease NS3. Forms a heterodimer with serine protease NS3. May form homooligomers. As to quaternary structure, forms a heterodimer with NS2B. Interacts with NS4B. Interacts with unphosphorylated RNA-directed RNA polymerase NS5; this interaction stimulates RNA-directed RNA polymerase NS5 guanylyltransferase activity. In terms of assembly, interacts with Serine protease/Helicase NS3. Interacts with NS1. Homodimer. Interacts with host STAT2; this interaction inhibits the phosphorylation of the latter, and, when all viral proteins are present (polyprotein), targets STAT2 for degradation. Interacts with host PAF1 complex. Specific enzymatic cleavages in vivo yield mature proteins. Cleavages in the lumen of endoplasmic reticulum are performed by host signal peptidase, whereas cleavages in the cytoplasmic side are performed by serine protease NS3. Signal cleavage at the 2K-4B site requires a prior NS3 protease-mediated cleavage at the 4A-2K site. Post-translationally, cleaved in post-Golgi vesicles by a host furin, releasing the mature small envelope protein M, and peptide pr. This cleavage is incomplete as up to 30% of viral particles still carry uncleaved prM. In terms of processing, not N-glycosylated. N-glycosylated. The excreted form is glycosylated and this is required for efficient secretion of the protein from infected cells. Post-translationally, acetylated by host KAT5. Acetylation modulates NS3 RNA-binding and unwinding activities and plays an important positive role for viral replication. In terms of processing, phosphorylated on serines residues. This phosphorylation may trigger NS5 nuclear localization.

It is found in the virion. The protein resides in the host nucleus. The protein localises to the host cytoplasm. It localises to the host perinuclear region. Its subcellular location is the secreted. It is found in the virion membrane. The protein resides in the host endoplasmic reticulum membrane. The catalysed reaction is Selective hydrolysis of -Xaa-Xaa-|-Yaa- bonds in which each of the Xaa can be either Arg or Lys and Yaa can be either Ser or Ala.. It catalyses the reaction RNA(n) + a ribonucleoside 5'-triphosphate = RNA(n+1) + diphosphate. The enzyme catalyses a ribonucleoside 5'-triphosphate + H2O = a ribonucleoside 5'-diphosphate + phosphate + H(+). It carries out the reaction ATP + H2O = ADP + phosphate + H(+). The catalysed reaction is a 5'-end (5'-triphosphoguanosine)-ribonucleoside in mRNA + S-adenosyl-L-methionine = a 5'-end (N(7)-methyl 5'-triphosphoguanosine)-ribonucleoside in mRNA + S-adenosyl-L-homocysteine. It catalyses the reaction a 5'-end (N(7)-methyl 5'-triphosphoguanosine)-ribonucleoside in mRNA + S-adenosyl-L-methionine = a 5'-end (N(7)-methyl 5'-triphosphoguanosine)-(2'-O-methyl-ribonucleoside) in mRNA + S-adenosyl-L-homocysteine + H(+). Plays a role in virus budding by binding to the cell membrane and gathering the viral RNA into a nucleocapsid that forms the core of a mature virus particle. During virus entry, may induce genome penetration into the host cytoplasm after hemifusion induced by the surface proteins. Can migrate to the cell nucleus where it modulates host functions. Overcomes the anti-viral effects of host EXOC1 by sequestering and degrading the latter through the proteasome degradation pathway. In terms of biological role, inhibits RNA silencing by interfering with host Dicer. Functionally, prevents premature fusion activity of envelope proteins in trans-Golgi by binding to envelope protein E at pH6.0. After virion release in extracellular space, gets dissociated from E dimers. Its function is as follows. Acts as a chaperone for envelope protein E during intracellular virion assembly by masking and inactivating envelope protein E fusion peptide. prM is the only viral peptide matured by host furin in the trans-Golgi network probably to avoid catastrophic activation of the viral fusion activity in acidic Golgi compartment prior to virion release. prM-E cleavage is inefficient, and many virions are only partially matured. These uncleaved prM would play a role in immune evasion. May play a role in virus budding. Exerts cytotoxic effects by activating a mitochondrial apoptotic pathway through M ectodomain. May display a viroporin activity. In terms of biological role, binds to host cell surface receptor and mediates fusion between viral and cellular membranes. Envelope protein is synthesized in the endoplasmic reticulum in the form of heterodimer with protein prM. They play a role in virion budding in the ER, and the newly formed immature particle is covered with 60 spikes composed of heterodimer between precursor prM and envelope protein E. The virion is transported to the Golgi apparatus where the low pH causes dissociation of PrM-E heterodimers and formation of E homodimers. prM-E cleavage is inefficient, and many virions are only partially matured. These uncleaved prM would play a role in immune evasion. Functionally, involved in immune evasion, pathogenesis and viral replication. Once cleaved off the polyprotein, is targeted to three destinations: the viral replication cycle, the plasma membrane and the extracellular compartment. Essential for viral replication. Required for formation of the replication complex and recruitment of other non-structural proteins to the ER-derived membrane structures. Excreted as a hexameric lipoparticle that plays a role against host immune response. Antagonizing the complement function. Binds to the host macrophages and dendritic cells. Inhibits signal transduction originating from Toll-like receptor 3 (TLR3). Its function is as follows. Component of the viral RNA replication complex that functions in virion assembly and antagonizes the host alpha/beta interferon antiviral response. Required cofactor for the serine protease function of NS3. May have membrane-destabilizing activity and form viroporins. In terms of biological role, displays three enzymatic activities: serine protease, NTPase and RNA helicase. NS3 serine protease, in association with NS2B, performs its autocleavage and cleaves the polyprotein at dibasic sites in the cytoplasm: C-prM, NS2A-NS2B, NS2B-NS3, NS3-NS4A, NS4A-2K and NS4B-NS5. NS3 RNA helicase binds RNA and unwinds dsRNA in the 3' to 5' direction. NS3 supports the separation of RNA daughter and template strands during viral replication. The helicase part is involved in the inhibition of phosphorylation of host STAT1, and thereby inhibition of host type-I IFN signaling. In addition, NS3 assists the initiation of replication by unwinding the RNA secondary structure in the 3' non-translated region (NTR). Inhibits STAT2 translocation in the nucleus after IFN-alpha treatment. Functionally, regulates the ATPase activity of the NS3 helicase activity. NS4A allows NS3 helicase to conserve energy during unwinding. Its function is as follows. Functions as a signal peptide for NS4B and is required for the interferon antagonism activity of the latter. Induces the formation of ER-derived membrane vesicles where the viral replication takes place. Inhibits interferon (IFN)-induced host STAT1 phosphorylation and nuclear translocation, thereby preventing the establishment of cellular antiviral state by blocking the IFN-alpha/beta pathway. Inhibits STAT2 translocation in the nucleus after IFN-alpha treatment. In terms of biological role, replicates the viral (+) and (-) RNA genome, and performs the capping of genomes in the cytoplasm. NS5 methylates viral RNA cap at guanine N-7 and ribose 2'-O positions. Besides its role in RNA genome replication, also prevents the establishment of cellular antiviral state by blocking the interferon-alpha/beta (IFN-alpha/beta) signaling pathway. Inhibits host TYK2 and STAT2 phosphorylation, thereby preventing activation of JAK-STAT signaling pathway. This is Genome polyprotein from Aedes (Tropical bont tick).